A 2122-amino-acid polypeptide reads, in one-letter code: Unique GC organizer UGO (2122 aa).

Transmembrane regions (helical) follow at residues 19–39 (FAVA…TNSL), 50–70 (LFGM…FVIV), 82–102 (TYIM…MQLI), 115–135 (VLTF…VLIG), and 145–165 (VVCS…DVGL). 13 disordered regions span residues 337 to 403 (AALH…HRSA), 422 to 532 (FRGL…GPFV), 565 to 591 (DLRE…SGLQ), 627 to 762 (HRRG…GRAN), 785 to 815 (HAAS…CSAS), 848 to 870 (MSRR…RAER), 903 to 949 (SKEG…ASAN), 999 to 1046 (RNET…LHSR), 1068 to 1308 (PSDL…HEAV), 1328 to 1368 (AGLS…SEEE), 1515 to 1540 (ANSS…AASA), 1560 to 1608 (AAEH…TPHT), and 1639 to 1727 (QGLG…TFFG). Positions 363–374 (RSNTLRGCSGQV) are enriched in polar residues. Composition is skewed to basic and acidic residues over residues 503-525 (LRMD…DPAK), 565-585 (DLRE…HAAA), and 632-645 (GARD…RGEP). Residues 672 to 687 (RLSRSRRHKTRTYRRG) show a composition bias toward basic residues. Residues 690–699 (SDGTTAGTSD) are compositionally biased toward low complexity. The span at 707–720 (LEDEGSDSGQESES) shows a compositional bias: acidic residues. Positions 725–735 (RRRMRSSRNRR) are enriched in basic residues. A compositionally biased stretch (low complexity) spans 741 to 750 (EDSSSGTSVR). The span at 751-760 (SEGRHCREGR) shows a compositional bias: basic and acidic residues. N762 carries N-linked (GlcNAc...) asparagine glycosylation. Basic residues predominate over residues 848–860 (MSRRRRREGKSRP). 2 stretches are compositionally biased toward polar residues: residues 999 to 1011 (RNET…SPAT) and 1072 to 1097 (SLFT…SARI). N1000 carries an N-linked (GlcNAc...) asparagine glycan. An N-linked (GlcNAc...) asparagine glycan is attached at N1165. Residues 1220-1261 (SREDLVGEADSHVSPEKEVFVSSRREKREEQVPRSRREERRD) are compositionally biased toward basic and acidic residues. Residues 1262–1276 (RRGRRWRRGRRRRKA) show a composition bias toward basic residues. Basic and acidic residues-rich tracts occupy residues 1277–1289 (RECS…RDSS) and 1345–1359 (GDMR…HSDG). Over residues 1515–1527 (ANSSTAVSSSLPD) the composition is skewed to polar residues. N-linked (GlcNAc...) asparagine glycosylation is present at N1516. Low complexity-rich tracts occupy residues 1528–1540 (STAW…AASA) and 1597–1608 (TQTPQTPQTPHT). Over residues 1684 to 1693 (LSATPSTRLQ) the composition is skewed to polar residues. Helical transmembrane passes span 1859–1879 (VAWL…LLRL), 1956–1976 (MLAL…WHLI), 1989–2009 (IIPA…ILAV), 2017–2037 (IFLL…PPGV), and 2040–2060 (VQLF…GQLF). Residues 2102–2122 (DEGSEDEVSMGSGHLVGDRSA) form a disordered region.

As to quaternary structure, interacts with guanylate cyclase GC; the interaction regulates guanylate cyclase GC trafficking and catalytic activity.

Its subcellular location is the cell membrane. In terms of biological role, in tachyzoites, required for the cellular trafficking of guanylate cyclase GC to the cell membrane and for GC guanylate cyclase activity. This Toxoplasma gondii (strain ATCC 50853 / GT1) protein is Unique GC organizer UGO.